Reading from the N-terminus, the 162-residue chain is MASVRTCVVRSDQWRLMTFETTENDKVKKINEHIRSQTKVSVQDQILLLDSKILKPHRKLSSYGIDKETTIHLTLKVVKPSDEELPLFLVESKNEGQRHLLRVRRSSSVAQVKEMIESVTSVIPKKQVVNCNGKKLEDGKIMADYNIKSGSLLFLTTHCTGG.

2 consecutive Ubiquitin-like domains span residues 3-78 and 87-160; these read SVRT…LKVV and LFLV…THCT.

The protein belongs to the ubiquitin D family. In terms of assembly, interacts directly with the 26S proteasome. Interacts with NUB1; this interaction facilitates the linking of UBD-conjugated target protein to the proteasome complex and accelerates its own degradation and that of its conjugates. Interacts (via ubiquitin-like 1 domain) with the spindle checkpoint protein MAD2L1 during mitosis. Present in aggresomes of proteasome inhibited cells. Interacts with HDAC6 under proteasome impairment conditions. Forms a thioester with UBA6 in cells stimulated with tumor necrosis factor-alpha (TNFa) and interferon-gamma (IFNg). Interacts with SQSTM1 and TP53/p53. Post-translationally, can be acetylated. Mostly expressed in thymus and intestine.

It is found in the nucleus. The protein resides in the cytoplasm. Ubiquitin-like protein modifier which can be covalently attached to target proteins and subsequently leads to their degradation by the 26S proteasome, in a NUB1-dependent manner. Conjugation to the target protein is activated by UBA6 via adenylation of its C-terminal glycine. Probably functions as a survival factor. Promotes the expression of the proteasome subunit beta type-9 (PSMB9/LMP2). Regulates TNF-alpha-induced and LPS-mediated activation of the central mediator of innate immunity NF-kappa-B by promoting TNF-alpha-mediated proteasomal degradation of ubiquitinated-I-kappa-B-alpha. Required for TNF-alpha-induced p65 nuclear translocation in renal tubular epithelial cells (RTECs). May be involved in dendritic cell (DC) maturation, the process by which immature dendritic cells differentiate into fully competent antigen-presenting cells that initiate T-cell responses. Mediates mitotic non-disjunction and chromosome instability, in long-term in vitro culture and cancers, by abbreviating mitotic phase and impairing the kinetochore localization of MAD2L1 during the prometaphase stage of the cell cycle. May be involved in the formation of aggresomes when proteasome is saturated or impaired. Mediates apoptosis in a caspase-dependent manner, especially in renal epithelium and tubular cells during renal diseases. This chain is Ubiquitin D (Ubd), found in Mus musculus (Mouse).